The sequence spans 91 residues: Small ribosomal subunit protein uS19 (91 aa).

Belongs to the universal ribosomal protein uS19 family.

In terms of biological role, protein S19 forms a complex with S13 that binds strongly to the 16S ribosomal RNA. This Syntrophotalea carbinolica (strain DSM 2380 / NBRC 103641 / GraBd1) (Pelobacter carbinolicus) protein is Small ribosomal subunit protein uS19.